The chain runs to 438 residues: Xylose isomerase (438 aa).

Active-site residues include His100 and Asp103. Glu231, Glu267, His270, Asp295, Asp306, Asp308, and Asp338 together coordinate Mg(2+).

It belongs to the xylose isomerase family. In terms of assembly, homotetramer. Mg(2+) serves as cofactor.

Its subcellular location is the cytoplasm. It carries out the reaction alpha-D-xylose = alpha-D-xylulofuranose. The chain is Xylose isomerase from Pseudomonas fluorescens (strain Pf0-1).